A 322-amino-acid chain; its full sequence is uncharacterized protein (322 aa).

Helical transmembrane passes span 159 to 179 (GIIFCIVSILYCIINIRMLYL), 203 to 223 (MNIPALGAWGSVVAITFYIWL), 234 to 254 (GGILTMTAFLLSAIAAIRVGL), 267 to 287 (FEGSSAVVIAIILGALPLIPY), and 296 to 316 (TLLSGYLSIVISMIINSFFAW).

The protein localises to the membrane. This is an uncharacterized protein from Dictyostelium discoideum (Social amoeba).